The sequence spans 316 residues: Large ribosomal subunit protein uL10 (316 aa).

Residues 289–316 are disordered; it reads AAAAAPAKEAPKEESEESDEDMGFGLFD.

This sequence belongs to the universal ribosomal protein uL10 family. In terms of assembly, P0 forms a pentameric complex by interaction with dimers of P1 and P2. In terms of processing, phosphorylated.

The protein resides in the nucleus. The protein localises to the cytoplasm. Functionally, ribosomal protein P0 is the functional equivalent of E.coli protein L10. This chain is Large ribosomal subunit protein uL10 (RPLP0), found in Gallus gallus (Chicken).